The following is a 571-amino-acid chain: Proline--tRNA ligase (571 aa).

It belongs to the class-II aminoacyl-tRNA synthetase family. ProS type 1 subfamily. Homodimer.

Its subcellular location is the cytoplasm. The enzyme catalyses tRNA(Pro) + L-proline + ATP = L-prolyl-tRNA(Pro) + AMP + diphosphate. Functionally, catalyzes the attachment of proline to tRNA(Pro) in a two-step reaction: proline is first activated by ATP to form Pro-AMP and then transferred to the acceptor end of tRNA(Pro). As ProRS can inadvertently accommodate and process non-cognate amino acids such as alanine and cysteine, to avoid such errors it has two additional distinct editing activities against alanine. One activity is designated as 'pretransfer' editing and involves the tRNA(Pro)-independent hydrolysis of activated Ala-AMP. The other activity is designated 'posttransfer' editing and involves deacylation of mischarged Ala-tRNA(Pro). The misacylated Cys-tRNA(Pro) is not edited by ProRS. The chain is Proline--tRNA ligase from Acinetobacter baumannii (strain ATCC 17978 / DSM 105126 / CIP 53.77 / LMG 1025 / NCDC KC755 / 5377).